The primary structure comprises 210 residues: MSSAQNIKKSIMAPVLDNNPIALQVLGVCSALAVTTKLETAFVMTLAVTFVTALSNFSVSLIRNHIPNSVRIIVQMAIIASLVIVVDQVLKAYLYDISKQLSVFVGLIITNCIVMGRAEAFAMKSAPVPSLIDGIGNGLGYGFVLITVGFFRELFGSGKLFGMEVLPLVSNGGWYQPNGLMLLAPSAFFLIGFLIWVIRILKPEQVEAKE.

Helical transmembrane passes span Phe-42–Ile-62, Ile-72–Ala-92, Val-103–Met-123, Leu-131–Phe-151, and Asn-178–Ile-198.

This sequence belongs to the NqrDE/RnfAE family. In terms of assembly, composed of six subunits; NqrA, NqrB, NqrC, NqrD, NqrE and NqrF.

The protein resides in the cell inner membrane. The enzyme catalyses a ubiquinone + n Na(+)(in) + NADH + H(+) = a ubiquinol + n Na(+)(out) + NAD(+). In terms of biological role, NQR complex catalyzes the reduction of ubiquinone-1 to ubiquinol by two successive reactions, coupled with the transport of Na(+) ions from the cytoplasm to the periplasm. NqrA to NqrE are probably involved in the second step, the conversion of ubisemiquinone to ubiquinol. The chain is Na(+)-translocating NADH-quinone reductase subunit D from Vibrio campbellii (strain ATCC BAA-1116).